The chain runs to 100 residues: MVKRTHGYRYKSRKLLRKKPRERGMSGLSRLLYEYKPGDKVVIDIDPTYITTAPHRRYQGKVGVVVGTRGRAYVIETYLGDKKKIVITTADHLVPYQGGS.

A compositionally biased stretch (basic residues) spans 1 to 21 (MVKRTHGYRYKSRKLLRKKPR). Residues 1-22 (MVKRTHGYRYKSRKLLRKKPRE) are disordered.

The protein belongs to the eukaryotic ribosomal protein eL21 family.

This chain is Large ribosomal subunit protein eL21, found in Pyrobaculum neutrophilum (strain DSM 2338 / JCM 9278 / NBRC 100436 / V24Sta) (Thermoproteus neutrophilus).